A 476-amino-acid chain; its full sequence is Sulfate adenylyltransferase subunit 1 (476 aa).

One can recognise a tr-type G domain in the interval 25–241 (KSLLRFLTCG…LETVEVQRVV (217 aa)). A G1 region spans residues 34–41 (GSVDDGKS). Residue 34 to 41 (GSVDDGKS) participates in GTP binding. A G2 region spans residues 92–96 (GITID). The G3 stretch occupies residues 113–116 (DTPG). GTP contacts are provided by residues 113–117 (DTPGH) and 168–171 (NKMD). A G4 region spans residues 168–171 (NKMD). A G5 region spans residues 206–208 (SAL).

This sequence belongs to the TRAFAC class translation factor GTPase superfamily. Classic translation factor GTPase family. CysN/NodQ subfamily. Heterodimer composed of CysD, the smaller subunit, and CysN.

It carries out the reaction sulfate + ATP + H(+) = adenosine 5'-phosphosulfate + diphosphate. Its pathway is sulfur metabolism; hydrogen sulfide biosynthesis; sulfite from sulfate: step 1/3. With CysD forms the ATP sulfurylase (ATPS) that catalyzes the adenylation of sulfate producing adenosine 5'-phosphosulfate (APS) and diphosphate, the first enzymatic step in sulfur assimilation pathway. APS synthesis involves the formation of a high-energy phosphoric-sulfuric acid anhydride bond driven by GTP hydrolysis by CysN coupled to ATP hydrolysis by CysD. This is Sulfate adenylyltransferase subunit 1 from Erwinia tasmaniensis (strain DSM 17950 / CFBP 7177 / CIP 109463 / NCPPB 4357 / Et1/99).